Here is a 379-residue protein sequence, read N- to C-terminus: Chaperone protein DnaJ (379 aa).

Residues 5-71 enclose the J domain; sequence DYYEILGVSR…EKRAMYDRFG (67 aa). Residues 149-231 form a CR-type zinc finger; that stretch reads GTTIPIEYDR…CGGSGRIRKR (83 aa). Zn(2+)-binding residues include C162, C165, C179, C182, C205, C208, C219, and C222. CXXCXGXG motif repeat units lie at residues 162 to 169, 179 to 186, 205 to 212, and 219 to 226; these read CSHCNGEG, CPKCHGTG, CNQCGGTG, and CHVCGGSG.

This sequence belongs to the DnaJ family. In terms of assembly, homodimer. Zn(2+) is required as a cofactor.

It is found in the cytoplasm. Its function is as follows. Participates actively in the response to hyperosmotic and heat shock by preventing the aggregation of stress-denatured proteins and by disaggregating proteins, also in an autonomous, DnaK-independent fashion. Unfolded proteins bind initially to DnaJ; upon interaction with the DnaJ-bound protein, DnaK hydrolyzes its bound ATP, resulting in the formation of a stable complex. GrpE releases ADP from DnaK; ATP binding to DnaK triggers the release of the substrate protein, thus completing the reaction cycle. Several rounds of ATP-dependent interactions between DnaJ, DnaK and GrpE are required for fully efficient folding. Also involved, together with DnaK and GrpE, in the DNA replication of plasmids through activation of initiation proteins. This Thermosipho africanus (strain TCF52B) protein is Chaperone protein DnaJ.